The following is a 223-amino-acid chain: B-cell antigen receptor complex-associated protein alpha chain (223 aa).

The N-terminal stretch at 1–31 is a signal peptide; that stretch reads MPEGPQALQSPPATIFLLLISAAGLGPGCQA. Residues 32–120 enclose the Ig-like C2-type domain; sequence LWVEWGPPSV…KIQRSCGTYL (89 aa). At 32–140 the chain is on the extracellular side; it reads LWVEWGPPSV…LDMGEGTKNN (109 aa). Cys53 and Cys104 are disulfide-bonded. Residues Asn56, Asn61, Asn71, and Asn95 are each glycosylated (N-linked (GlcNAc...) asparagine). A helical transmembrane segment spans residues 141–161; it reads IITAEGIILLICAVVPGTLLL. At 162–223 the chain is on the cytoplasmic side; the sequence is FRKRWQNMKF…HIGDAQLEKP (62 aa). Residues 174–202 form the ITAM domain; it reads DIQDDYEDENLYEGLNLDDCSMYEDISRG. The residue at position 185 (Tyr185) is a Phosphotyrosine; by SRC-type Tyr-kinases. Position 196 is a phosphotyrosine (Tyr196). Position 201 is an asymmetric dimethylarginine; by PRMT1 (Arg201). Tyr207 is subject to Phosphotyrosine; by Tyr-kinases.

As to quaternary structure, heterodimer of alpha and beta chains; disulfide-linked. Part of the B-cell antigen receptor complex where the alpha/beta chain heterodimer is non-covalently associated with an antigen-specific membrane-bound surface immunoglobulin of two heavy chains and two light chains. Interacts through its phosphorylated ITAM domain with the SH2 domains of SYK which stimulates SYK autophosphorylation and activation. Also interacts, when phosphorylated on Tyr-207, with the SH2 domain of BLNK/SLP65, bringing BLNK into proximity with SYK and allowing SYK to phosphorylate BLNK which is necessary for trafficking of the BCR to late endosomes. Interacts with Src-family tyrosine kinases including FYN and LYN, increasing their activity. In terms of processing, phosphorylated on tyrosine, serine and threonine residues upon B-cell activation. Phosphorylation of tyrosine residues by Src-family kinases, including LYN, is an early and essential feature of the BCR signaling cascade. The phosphorylated tyrosines serve as docking sites for SH2-domain containing kinases, leading to their activation which in turn leads to phosphorylation of downstream targets. Phosphorylation of serine and threonine residues may prevent subsequent tyrosine phosphorylation. Post-translationally, arginine methylation in the ITAM domain may interfere with the binding of SYK. It promotes signals leading to B-cell differentiation. As to expression, B-cells.

The protein localises to the cell membrane. Its function is as follows. Required in cooperation with CD79B for initiation of the signal transduction cascade activated by binding of antigen to the B-cell antigen receptor complex (BCR) which leads to internalization of the complex, trafficking to late endosomes and antigen presentation. Also required for BCR surface expression and for efficient differentiation of pro- and pre-B-cells. Stimulates SYK autophosphorylation and activation. Binds to BLNK, bringing BLNK into proximity with SYK and allowing SYK to phosphorylate BLNK. Also interacts with and increases activity of some Src-family tyrosine kinases. Represses BCR signaling during development of immature B-cells. The polypeptide is B-cell antigen receptor complex-associated protein alpha chain (CD79A) (Bos taurus (Bovine)).